Reading from the N-terminus, the 378-residue chain is Dual-specificity RNA methyltransferase RlmN (378 aa).

Glu95 (proton acceptor) is an active-site residue. The Radical SAM core domain occupies 101-345; that stretch reads EETRGTLCVS…TTIRKTRGDD (245 aa). Cysteines 108 and 350 form a disulfide. [4Fe-4S] cluster-binding residues include Cys115, Cys119, and Cys122. S-adenosyl-L-methionine contacts are provided by residues 176–177, Ser208, 230–232, and Asn307; these read GE and SLH. Cys350 acts as the S-methylcysteine intermediate in catalysis.

This sequence belongs to the radical SAM superfamily. RlmN family. The cofactor is [4Fe-4S] cluster.

The protein resides in the cytoplasm. It catalyses the reaction adenosine(2503) in 23S rRNA + 2 reduced [2Fe-2S]-[ferredoxin] + 2 S-adenosyl-L-methionine = 2-methyladenosine(2503) in 23S rRNA + 5'-deoxyadenosine + L-methionine + 2 oxidized [2Fe-2S]-[ferredoxin] + S-adenosyl-L-homocysteine. The catalysed reaction is adenosine(37) in tRNA + 2 reduced [2Fe-2S]-[ferredoxin] + 2 S-adenosyl-L-methionine = 2-methyladenosine(37) in tRNA + 5'-deoxyadenosine + L-methionine + 2 oxidized [2Fe-2S]-[ferredoxin] + S-adenosyl-L-homocysteine. In terms of biological role, specifically methylates position 2 of adenine 2503 in 23S rRNA and position 2 of adenine 37 in tRNAs. m2A2503 modification seems to play a crucial role in the proofreading step occurring at the peptidyl transferase center and thus would serve to optimize ribosomal fidelity. This is Dual-specificity RNA methyltransferase RlmN from Burkholderia pseudomallei (strain K96243).